The chain runs to 514 residues: ATP synthase subunit alpha (514 aa).

ATP is bound at residue 170 to 177 (GDRQTGKT).

The protein belongs to the ATPase alpha/beta chains family. As to quaternary structure, F-type ATPases have 2 components, CF(1) - the catalytic core - and CF(0) - the membrane proton channel. CF(1) has five subunits: alpha(3), beta(3), gamma(1), delta(1), epsilon(1). CF(0) has three main subunits: a(1), b(2) and c(9-12). The alpha and beta chains form an alternating ring which encloses part of the gamma chain. CF(1) is attached to CF(0) by a central stalk formed by the gamma and epsilon chains, while a peripheral stalk is formed by the delta and b chains.

Its subcellular location is the cell inner membrane. It catalyses the reaction ATP + H2O + 4 H(+)(in) = ADP + phosphate + 5 H(+)(out). In terms of biological role, produces ATP from ADP in the presence of a proton gradient across the membrane. The alpha chain is a regulatory subunit. The polypeptide is ATP synthase subunit alpha (Acidithiobacillus ferridurans).